Reading from the N-terminus, the 5085-residue chain is Protein piccolo (5085 aa).

Over residues 1–20 (MGNEASLEGEGLPEGLAAAA) the composition is skewed to low complexity. Disordered regions lie at residues 1 to 142 (MGNE…DFKE) and 173 to 516 (DLIS…TPAQ). The span at 92 to 101 (PGKPPDPGRP) shows a compositional bias: pro residues. 3 stretches are compositionally biased toward basic and acidic residues: residues 110-121 (RTTDTFRSEQKL), 132-142 (KESKSRTDFKE), and 184-198 (ETTK…EQGK). Residues Ser211 and Ser231 each carry the phosphoserine modification. The segment covering 227 to 240 (QQDSSPKSVSSQQA) has biased composition (polar residues). Residues 253-268 (PSQQSPAQTPAQQASP) are compositionally biased toward low complexity. 3 stretches are compositionally biased toward polar residues: residues 275–285 (QPGSAKATVQQ), 318–332 (KTSS…SLAQ), and 375–391 (TPAQ…QQPG). The segment at 372 to 491 (PTKTPAQQSG…LAKPSAQQPT (120 aa)) is 12 X 10 AA tandem approximate repeats of P-A-K-P-Q-P-Q-Q-P-X. A compositionally biased stretch (pro residues) spans 392 to 408 (PTKPSPQQPIPAKPQPQ). Positions 409–423 (QPVATKTQPQQSAPA) are enriched in low complexity. Over residues 424-472 (KPQPQQPAPAKPQPQQPTPAKPQPQPPTPAKPQPQPPTATKPQPQPPTA) the composition is skewed to pro residues. The segment covering 486-499 (SAQQPTKSISQTVT) has biased composition (polar residues). Residues 523-547 (CPLCNTTELLLHIPEKANFNTCTEC) form a C4-type zinc finger. Disordered stretches follow at residues 586 to 880 (AAIP…TVTG), 896 to 1012 (LIST…ACPL), 1069 to 1357 (QLGD…PSDL), 1373 to 1604 (STLV…EELV), and 1622 to 1815 (TIAD…SDPE). Positions 596-613 (PKAATAPTATASKSPVPS) are enriched in low complexity. The segment covering 618–654 (PKKEPPSKQDSPKALESKKPPEPKKPPEPKKPPEPKK) has biased composition (basic and acidic residues). Over residues 672–682 (APQLPVAEALP) the composition is skewed to low complexity. Positions 683-693 (EPAPPKEPSGP) are enriched in pro residues. Positions 705-717 (VEPKQPKMTETRA) are enriched in basic and acidic residues. Positions 718-767 (DIQSSSTTKPDILSSQVQSQAQVKTASPLKTDSAKPSQSFPPTGEKTTPL) are enriched in polar residues. Basic and acidic residues predominate over residues 790–808 (ESKDPKHIDPIQKKDEPKK). Ser857 and Ser869 each carry phosphoserine. 3 stretches are compositionally biased toward polar residues: residues 867–878 (PKSQPTTPQETV), 896–906 (LISTAGQQGPH), and 917–936 (QAPT…STGQ). Thr873 is modified (phosphothreonine). Residues 990–1004 (EPEKAVPAHKPDKTT) show a composition bias toward basic and acidic residues. The segment at 1010–1033 (CPLCRTELNLGSQEPPNFNTCTEC) adopts a C4-type zinc-finger fold. Residues 1077 to 1092 (PPAPSGPKASPMPAPA) show a composition bias toward pro residues. A compositionally biased stretch (basic and acidic residues) spans 1110–1129 (KEAEGKTEAEKPVPEKETAS). Position 1133 is a phosphothreonine (Thr1133). Composition is skewed to basic and acidic residues over residues 1141–1150 (QKLEESEGKK), 1157–1199 (PEKK…KLPP), and 1274–1295 (SSKD…DKSD). Residues 1300–1318 (QQPKSPQGLSDTGYSSDGI) show a composition bias toward polar residues. A phosphoserine mark is found at Ser1304, Ser1314, Ser1315, Ser1344, Ser1346, Ser1349, Ser1350, and Ser1353. Basic and acidic residues predominate over residues 1331 to 1345 (SDEKDLLKGLKKDSF). The span at 1346-1355 (SQESSPSSPS) shows a compositional bias: low complexity. The span at 1378 to 1396 (EKAEKKTQPQKISPEKPQD) shows a compositional bias: basic and acidic residues. Residues 1397 to 1407 (QQKTQTASETL) are compositionally biased toward polar residues. Basic and acidic residues predominate over residues 1417-1456 (KESQEKKVSPKKDSEQGFPSRKEHKEKPELVDDLSPRRAS). A phosphoserine mark is found at Ser1451, Ser1463, Ser1464, Ser1466, Ser1469, Ser1493, Ser1496, Ser1517, and Ser1519. Acidic residues predominate over residues 1511 to 1523 (SADEDASGSEDEE). At Thr1564 the chain carries Phosphothreonine. Residues Ser1565, Ser1575, and Ser1587 each carry the phosphoserine modification. A compositionally biased stretch (acidic residues) spans 1578–1587 (DEDDETFDES). The span at 1588 to 1599 (PELKFRETKSQE) shows a compositional bias: basic and acidic residues. The segment covering 1622 to 1635 (TIADKYSSESSQKK) has biased composition (polar residues). The span at 1640-1650 (FDEEPELEMES) shows a compositional bias: acidic residues. Residue Ser1650 is modified to Phosphoserine. Residue Thr1652 is modified to Phosphothreonine. Ser1654 and Ser1659 each carry phosphoserine. Polar residues predominate over residues 1662 to 1679 (EGSSSLHASSFTPGTSPT). Residues 1719 to 1732 (DSSEEEELREEEEL) are compositionally biased toward acidic residues. 2 positions are modified to phosphoserine: Ser1720 and Ser1721. The span at 1733–1746 (LKEQEKQRELEQQQ) shows a compositional bias: basic and acidic residues. A Phosphothreonine modification is found at Thr1772. Phosphoserine is present on Ser1778. A compositionally biased stretch (basic and acidic residues) spans 1787-1802 (EELRQAAEMEELHRSS). Ser1807, Ser1812, Ser1820, and Ser1841 each carry phosphoserine. Disordered regions lie at residues 2116–2139 (PSES…SSVC), 2275–2385 (ELTK…PTYP), and 2456–2486 (KPPI…TGLS). Low complexity predominate over residues 2121 to 2139 (TSVPPSDTPSLTSSISSVC). Pro residues predominate over residues 2350 to 2384 (QPPPPPPPPPPSPSTSSPPPTPPLPPATSPKPPTY). Ser2511 carries the post-translational modification Phosphoserine. Thr2702 is a glycosylation site (O-linked (GlcNAc) threonine). O-linked (GlcNAc) serine glycosylation is present at Ser2976. Thr3014 carries the post-translational modification Phosphothreonine. Disordered stretches follow at residues 3350–3457 (KEEK…PLSK) and 3503–3572 (KTYK…LYSP). Ser3374 carries the post-translational modification Phosphoserine. A compositionally biased stretch (basic and acidic residues) spans 3377-3386 (DDPRNLKKIV). Position 3388 is a phosphoserine (Ser3388). Phosphothreonine is present on residues Thr3392 and Thr3419. A compositionally biased stretch (acidic residues) spans 3419 to 3428 (TDDEDQDEWD). The segment covering 3511–3523 (GCQTETDSDTQSP) has biased composition (polar residues). Phosphoserine is present on residues Ser3522, Ser3530, Ser3561, Ser3565, Ser3571, Ser3574, Ser3577, Ser3598, Ser3624, Ser3626, and Ser3632. Disordered regions lie at residues 3602 to 3695 (VLHP…ASRR) and 3774 to 3816 (AEDR…FIPP). 2 stretches are compositionally biased toward polar residues: residues 3647–3663 (EGFT…SGTQ) and 3679–3691 (STGT…TMGT). At Ser3781 the chain carries Phosphoserine. Residues 3791 to 3803 (SRVESQHGVERPR) are compositionally biased toward basic and acidic residues. Positions 3805–3816 (APQTEFSQFIPP) are enriched in polar residues. 2 positions are modified to phosphoserine: Ser4034 and Ser4150. Disordered stretches follow at residues 4225-4248 (ADKP…YGLD) and 4272-4291 (VSFG…LPIS). The span at 4228-4248 (PYSSGSRSRPSSRPSSVYGLD) shows a compositional bias: low complexity. A compositionally biased stretch (polar residues) spans 4275-4291 (GHSSSSARTKPTSLPIS). Ser4304, Ser4308, Ser4311, Ser4340, and Ser4376 each carry phosphoserine. The disordered stretch occupies residues 4335–4357 (RDQFGSSHSLPEVQQHMREESRT). In terms of domain architecture, PDZ spans 4442 to 4536 (RVKITRDFKD…EAEICVRLDL (95 aa)). The disordered stretch occupies residues 4589–4638 (VEKGSHAHSGPTSAGSSSVPSPGQPGSPSVSKKKHSSTKPTDGPKAASHP). Residues 4595–4618 (AHSGPTSAGSSSVPSPGQPGSPSV) show a composition bias toward low complexity. Ser4609 is modified (phosphoserine). The C2 1 domain occupies 4639 to 4768 (ITGEIQLQIN…SHLDNTPRWY (130 aa)). Positions 4668 and 4674 each coordinate Ca(2+). Ser4723 is subject to Phosphoserine. Residues Asp4738, Asp4740, Ser4743, and Asp4746 each contribute to the Ca(2+) site. Disordered regions lie at residues 4775–4851 (ESID…SVAQ) and 4874–4908 (QPTK…SEGS). Composition is skewed to low complexity over residues 4783–4795 (HSSQ…PKPS) and 4822–4832 (SSPGSSKSSSE). Polar residues predominate over residues 4840-4851 (PSRSQSKTSVAQ). A compositionally biased stretch (low complexity) spans 4886–4908 (SSVSTGSSGSSVGSGYSVDSEGS). The region spanning 4950–5075 (VMGEIKLALK…DLRKRIVNWH (126 aa)) is the C2 2 domain.

In terms of assembly, interacts with BSN, ERC2/CAST1, RIMS1 and UNC13A. Interacts (via C-terminus) with TRIO (via N-terminus). Interacts with CTBP1. Interacts with SIAH1; this interaction negatively regulates SIAH1 E3 ligase activity. Directly interacts with GIT1 and GIT2. Ca(2+) serves as cofactor. As to expression, expressed in brain (at protein level).

It is found in the presynaptic active zone. Functionally, scaffold protein of the presynaptic cytomatrix at the active zone (CAZ) which is the place in the synapse where neurotransmitter is released. After synthesis, participates in the formation of Golgi-derived membranous organelles termed Piccolo-Bassoon transport vesicles (PTVs) that are transported along axons to sites of nascent synaptic contacts. At the presynaptic active zone, regulates the spatial organization of synaptic vesicle cluster, the protein complexes that execute membrane fusion and compensatory endocytosis. Organizes as well the readily releasable pool of synaptic vesicles and safeguards a fraction of them to be not immediately available for action potential-induced release. Also functions in processes other than assembly such as the regulation of specific presynaptic protein ubiquitination by interacting with SIAH1 or the regulation of presynaptic autophagy. Also mediates synapse to nucleus communication leading to reconfiguration of gene expression by associating with the transcriptional corepressor CTBP1 and by subsequently reducing the size of its pool available for nuclear import. The chain is Protein piccolo (Pclo) from Rattus norvegicus (Rat).